The chain runs to 86 residues: Small ribosomal subunit protein uS17 (86 aa).

It belongs to the universal ribosomal protein uS17 family. As to quaternary structure, part of the 30S ribosomal subunit.

Functionally, one of the primary rRNA binding proteins, it binds specifically to the 5'-end of 16S ribosomal RNA. In Shouchella clausii (strain KSM-K16) (Alkalihalobacillus clausii), this protein is Small ribosomal subunit protein uS17.